The sequence spans 384 residues: Guanine nucleotide-binding protein alpha-2 subunit (384 aa).

Positions methionine 1–alanine 23 are disordered. Glycine 2 is lipidated: N-myristoyl glycine. The S-palmitoyl cysteine moiety is linked to residue cysteine 5. Residues histidine 38–leucine 384 form the G-alpha domain. Residues lysine 41–threonine 54 form a G1 motif region. GTP-binding residues include glutamate 49, serine 50, glycine 51, lysine 52, serine 53, threonine 54, aspartate 163, leucine 188, tyrosine 189, threonine 194, glycine 222, asparagine 288, lysine 289, aspartate 291, and alanine 356. Serine 53 serves as a coordination point for Mg(2+). Positions aspartate 186–threonine 194 are G2 motif. Residue threonine 194 participates in Mg(2+) binding. The segment at tyrosine 215 to arginine 224 is G3 motif. The tract at residues methionine 284–aspartate 291 is G4 motif. The G5 motif stretch occupies residues threonine 354 to glutamine 359.

The protein belongs to the G-alpha family. In terms of assembly, g proteins are composed of 3 units; alpha, beta and gamma. The alpha chain contains the guanine nucleotide binding site. Mg(2+) serves as cofactor.

Guanine nucleotide-binding proteins (G proteins) are involved as modulators or transducers in various transmembrane signaling systems. This is Guanine nucleotide-binding protein alpha-2 subunit (GPA2) from Pisum sativum (Garden pea).